A 243-amino-acid chain; its full sequence is Pyridoxine 5'-phosphate synthase (243 aa).

N9 lines the 3-amino-2-oxopropyl phosphate pocket. Position 11–12 (11–12 (DH)) interacts with 1-deoxy-D-xylulose 5-phosphate. R20 is a binding site for 3-amino-2-oxopropyl phosphate. The Proton acceptor role is filled by H45. Positions 47 and 52 each coordinate 1-deoxy-D-xylulose 5-phosphate. Catalysis depends on E72, which acts as the Proton acceptor. T102 is a binding site for 1-deoxy-D-xylulose 5-phosphate. Catalysis depends on H193, which acts as the Proton donor. Residues G194 and 215–216 (GH) contribute to the 3-amino-2-oxopropyl phosphate site.

It belongs to the PNP synthase family. Homooctamer; tetramer of dimers.

It is found in the cytoplasm. It carries out the reaction 3-amino-2-oxopropyl phosphate + 1-deoxy-D-xylulose 5-phosphate = pyridoxine 5'-phosphate + phosphate + 2 H2O + H(+). Its pathway is cofactor biosynthesis; pyridoxine 5'-phosphate biosynthesis; pyridoxine 5'-phosphate from D-erythrose 4-phosphate: step 5/5. Its function is as follows. Catalyzes the complicated ring closure reaction between the two acyclic compounds 1-deoxy-D-xylulose-5-phosphate (DXP) and 3-amino-2-oxopropyl phosphate (1-amino-acetone-3-phosphate or AAP) to form pyridoxine 5'-phosphate (PNP) and inorganic phosphate. In Pectobacterium atrosepticum (strain SCRI 1043 / ATCC BAA-672) (Erwinia carotovora subsp. atroseptica), this protein is Pyridoxine 5'-phosphate synthase.